We begin with the raw amino-acid sequence, 149 residues long: Limonene-1,2-epoxide hydrolase (149 aa).

Aspartate 101 acts as the Proton donor in catalysis. The active-site Proton acceptor is aspartate 132.

The protein belongs to the limonene-1,2-epoxide hydrolase family. Monomer.

The catalysed reaction is limonene 1,2-epoxide + H2O = limonene-1,2-diol. The protein operates within terpene metabolism; (4R)-limonene degradation; (1S,4R)-1-hydroxylimonen-2-one from (4R)-limonene: step 2/3. Its function is as follows. Catalyzes the conversion of limonene-1,2-epoxide to limonene-1,2-diol. Can use both the (-) and (+) isomers of limonene-1,2-epoxide as substrates and also has some activity with 1-methylcyclohexene oxide, cyclohexene oxide and indene oxide as substrates. In Rhodococcus erythropolis (Arthrobacter picolinophilus), this protein is Limonene-1,2-epoxide hydrolase (limA).